Here is a 404-residue protein sequence, read N- to C-terminus: Formate-dependent phosphoribosylglycinamide formyltransferase (404 aa).

Residues Glu-25 to Leu-26 and Glu-85 each bind N(1)-(5-phospho-beta-D-ribosyl)glycinamide. ATP-binding positions include Arg-118, Lys-159, Ser-164 to Gln-169, Glu-199 to Ile-202, and Glu-207. One can recognise an ATP-grasp domain in the interval Arg-123–Leu-318. Mg(2+) is bound by residues Glu-277 and Glu-289. Residues Asp-296, Lys-365, and Arg-372 to Arg-373 contribute to the N(1)-(5-phospho-beta-D-ribosyl)glycinamide site.

It belongs to the PurK/PurT family. In terms of assembly, homodimer.

It carries out the reaction N(1)-(5-phospho-beta-D-ribosyl)glycinamide + formate + ATP = N(2)-formyl-N(1)-(5-phospho-beta-D-ribosyl)glycinamide + ADP + phosphate + H(+). It participates in purine metabolism; IMP biosynthesis via de novo pathway; N(2)-formyl-N(1)-(5-phospho-D-ribosyl)glycinamide from N(1)-(5-phospho-D-ribosyl)glycinamide (formate route): step 1/1. Functionally, involved in the de novo purine biosynthesis. Catalyzes the transfer of formate to 5-phospho-ribosyl-glycinamide (GAR), producing 5-phospho-ribosyl-N-formylglycinamide (FGAR). Formate is provided by PurU via hydrolysis of 10-formyl-tetrahydrofolate. The polypeptide is Formate-dependent phosphoribosylglycinamide formyltransferase (Burkholderia lata (strain ATCC 17760 / DSM 23089 / LMG 22485 / NCIMB 9086 / R18194 / 383)).